The chain runs to 260 residues: Proteasome subunit alpha (260 aa).

Belongs to the peptidase T1A family. In terms of assembly, the 20S proteasome core is composed of 14 alpha and 14 beta subunits that assemble into four stacked heptameric rings, resulting in a barrel-shaped structure. The two inner rings, each composed of seven catalytic beta subunits, are sandwiched by two outer rings, each composed of seven alpha subunits. The catalytic chamber with the active sites is on the inside of the barrel. Has a gated structure, the ends of the cylinder being occluded by the N-termini of the alpha-subunits. Is capped at one or both ends by the proteasome regulatory ATPase, PAN.

The protein localises to the cytoplasm. The formation of the proteasomal ATPase PAN-20S proteasome complex, via the docking of the C-termini of PAN into the intersubunit pockets in the alpha-rings, triggers opening of the gate for substrate entry. Interconversion between the open-gate and close-gate conformations leads to a dynamic regulation of the 20S proteasome proteolysis activity. In terms of biological role, component of the proteasome core, a large protease complex with broad specificity involved in protein degradation. This is Proteasome subunit alpha from Thermococcus gammatolerans (strain DSM 15229 / JCM 11827 / EJ3).